Reading from the N-terminus, the 224-residue chain is Menaquinol:cytochrome c reductase cytochrome b subunit (224 aa).

The chain crosses the membrane as a helical span at residues 37 to 57 (FSAFVYCFGGLTFFVTVIQIL). Tyr-42 lines the heme b pocket. Cys-43 contacts heme c. The heme b site is built by Arg-91, His-94, His-108, and Arg-111. 3 helical membrane-spanning segments follow: residues 96–116 (WGAS…FFQG), 126–146 (WIVG…GYLL), and 195–215 (IHVF…FLMI). 2 residues coordinate heme b: His-196 and His-211. Heme c-binding residues include Arg-216 and Ile-220. A heme b-binding site is contributed by Ser-221.

The protein belongs to the cytochrome b family. In terms of assembly, the main subunits of the menaquinol:cytochrome c complex are a Rieske-type iron-sulfur protein (QcrA), a cytochrome b (QcrB) and a cytochrome c (QcrC). It depends on heme b as a cofactor. Requires heme c as cofactor.

The protein localises to the cell membrane. Its function is as follows. Component of the menaquinol:cytochrome c reductase complex. In Geobacillus thermodenitrificans, this protein is Menaquinol:cytochrome c reductase cytochrome b subunit (qcrB).